Reading from the N-terminus, the 99-residue chain is Small ribosomal subunit protein uS14m (99 aa).

It belongs to the universal ribosomal protein uS14 family.

It is found in the mitochondrion. This Prototheca wickerhamii protein is Small ribosomal subunit protein uS14m (RPS14).